Here is a 369-residue protein sequence, read N- to C-terminus: Maltose/maltodextrin import ATP-binding protein MalK (369 aa).

The region spanning 4–234 (VTLRNVCKSY…PKNRFVAGFI (231 aa)) is the ABC transporter domain. Position 36–43 (36–43 (GPSGCGKS)) interacts with ATP.

This sequence belongs to the ABC transporter superfamily. Maltooligosaccharide importer (TC 3.A.1.1.1) family. As to quaternary structure, the complex is composed of two ATP-binding proteins (MalK), two transmembrane proteins (MalG and MalK) and a solute-binding protein (MalE).

The protein resides in the cell inner membrane. It catalyses the reaction D-maltose(out) + ATP + H2O = D-maltose(in) + ADP + phosphate + H(+). Its function is as follows. Part of the ABC transporter complex MalEFGK involved in maltose/maltodextrin import. Responsible for energy coupling to the transport system. In Aliivibrio fischeri (strain ATCC 700601 / ES114) (Vibrio fischeri), this protein is Maltose/maltodextrin import ATP-binding protein MalK.